Here is a 125-residue protein sequence, read N- to C-terminus: Small ribosomal subunit protein uS13 (125 aa).

A disordered region spans residues 93-125 (RSLPVRGQRTRTNARTRKGKRKTVAGKKKAGKK).

This sequence belongs to the universal ribosomal protein uS13 family. As to quaternary structure, part of the 30S ribosomal subunit. Forms a loose heterodimer with protein S19. Forms two bridges to the 50S subunit in the 70S ribosome.

Functionally, located at the top of the head of the 30S subunit, it contacts several helices of the 16S rRNA. In the 70S ribosome it contacts the 23S rRNA (bridge B1a) and protein L5 of the 50S subunit (bridge B1b), connecting the 2 subunits; these bridges are implicated in subunit movement. Contacts the tRNAs in the A and P-sites. The sequence is that of Small ribosomal subunit protein uS13 from Chlorobaculum tepidum (strain ATCC 49652 / DSM 12025 / NBRC 103806 / TLS) (Chlorobium tepidum).